The chain runs to 210 residues: Thymidylate kinase (210 aa).

10–17 serves as a coordination point for ATP; that stretch reads GLEGAGKT.

This sequence belongs to the thymidylate kinase family.

It catalyses the reaction dTMP + ATP = dTDP + ADP. In terms of biological role, phosphorylation of dTMP to form dTDP in both de novo and salvage pathways of dTTP synthesis. This chain is Thymidylate kinase, found in Erwinia tasmaniensis (strain DSM 17950 / CFBP 7177 / CIP 109463 / NCPPB 4357 / Et1/99).